The following is a 476-amino-acid chain: Glycogen synthase (476 aa).

An ADP-alpha-D-glucose-binding site is contributed by Lys-15.

Belongs to the glycosyltransferase 1 family. Bacterial/plant glycogen synthase subfamily.

It catalyses the reaction [(1-&gt;4)-alpha-D-glucosyl](n) + ADP-alpha-D-glucose = [(1-&gt;4)-alpha-D-glucosyl](n+1) + ADP + H(+). It functions in the pathway glycan biosynthesis; glycogen biosynthesis. Functionally, synthesizes alpha-1,4-glucan chains using ADP-glucose. In Yersinia pestis bv. Antiqua (strain Antiqua), this protein is Glycogen synthase.